Consider the following 457-residue polypeptide: Glutamyl-tRNA reductase (457 aa).

Substrate is bound by residues 49 to 52 (TCNR), serine 109, 114 to 116 (ETQ), and glutamine 120. The active-site Nucleophile is cysteine 50. An NADP(+)-binding site is contributed by 189 to 194 (GAGKMG).

Belongs to the glutamyl-tRNA reductase family. Homodimer.

The catalysed reaction is (S)-4-amino-5-oxopentanoate + tRNA(Glu) + NADP(+) = L-glutamyl-tRNA(Glu) + NADPH + H(+). It functions in the pathway porphyrin-containing compound metabolism; protoporphyrin-IX biosynthesis; 5-aminolevulinate from L-glutamyl-tRNA(Glu): step 1/2. Catalyzes the NADPH-dependent reduction of glutamyl-tRNA(Glu) to glutamate 1-semialdehyde (GSA). The polypeptide is Glutamyl-tRNA reductase (Oceanobacillus iheyensis (strain DSM 14371 / CIP 107618 / JCM 11309 / KCTC 3954 / HTE831)).